Reading from the N-terminus, the 449-residue chain is Tubulin alpha-2 chain (449 aa).

Glutamine 11 lines the GTP pocket. An N6-acetyllysine modification is found at lysine 40. Residues serine 140, glycine 144, threonine 145, threonine 179, asparagine 206, and asparagine 228 each coordinate GTP. Residue glutamate 254 is part of the active site.

Belongs to the tubulin family. As to quaternary structure, dimer of alpha and beta chains. A typical microtubule is a hollow water-filled tube with an outer diameter of 25 nm and an inner diameter of 15 nM. Alpha-beta heterodimers associate head-to-tail to form protofilaments running lengthwise along the microtubule wall with the beta-tubulin subunit facing the microtubule plus end conferring a structural polarity. Microtubules usually have 13 protofilaments but different protofilament numbers can be found in some organisms and specialized cells. In terms of processing, acetylation of alpha chains at Lys-40 stabilizes microtubules and affects affinity and processivity of microtubule motors. This modification has a role in multiple cellular functions, ranging from cell motility, cell cycle progression or cell differentiation to intracellular trafficking and signaling.

The protein resides in the cytoplasm. It is found in the cytoskeleton. It catalyses the reaction GTP + H2O = GDP + phosphate + H(+). In terms of biological role, tubulin is the major constituent of microtubules, a cylinder consisting of laterally associated linear protofilaments composed of alpha- and beta-tubulin heterodimers. Microtubules grow by the addition of GTP-tubulin dimers to the microtubule end, where a stabilizing cap forms. Below the cap, tubulin dimers are in GDP-bound state, owing to GTPase activity of alpha-tubulin. This Stylonychia lemnae (Ciliate) protein is Tubulin alpha-2 chain.